The primary structure comprises 45 residues: Conotoxin reg3.12 (45 aa).

A propeptide spanning residues 1-31 (DQPVERHAGNKRHLNPTIRRAMIIDANRREK) is cleaved from the precursor. Intrachain disulfides connect Cys-32-Cys-44, Cys-33-Cys-42, and Cys-38-Cys-45.

It belongs to the conotoxin M superfamily. Expressed by the venom duct.

The protein resides in the secreted. This chain is Conotoxin reg3.12, found in Conus regius (Crown cone).